The primary structure comprises 872 residues: Alanine--tRNA ligase (872 aa).

Histidine 567, histidine 571, cysteine 669, and histidine 673 together coordinate Zn(2+).

The protein belongs to the class-II aminoacyl-tRNA synthetase family. Zn(2+) serves as cofactor.

Its subcellular location is the cytoplasm. The enzyme catalyses tRNA(Ala) + L-alanine + ATP = L-alanyl-tRNA(Ala) + AMP + diphosphate. In terms of biological role, catalyzes the attachment of alanine to tRNA(Ala) in a two-step reaction: alanine is first activated by ATP to form Ala-AMP and then transferred to the acceptor end of tRNA(Ala). Also edits incorrectly charged Ser-tRNA(Ala) and Gly-tRNA(Ala) via its editing domain. The chain is Alanine--tRNA ligase from Streptococcus pyogenes serotype M1.